Consider the following 525-residue polypeptide: Phosphoenolpyruvate carboxykinase (ATP) (525 aa).

Substrate-binding residues include R54, Y190, and K196. ATP contacts are provided by residues K196, H215, and 231–239 (GLSGTGKTT). Mn(2+)-binding residues include K196 and H215. D252 is a Mn(2+) binding site. E280, R316, and T441 together coordinate ATP. Residue R316 coordinates substrate.

It belongs to the phosphoenolpyruvate carboxykinase (ATP) family. Mn(2+) is required as a cofactor.

The protein localises to the cytoplasm. The enzyme catalyses oxaloacetate + ATP = phosphoenolpyruvate + ADP + CO2. It participates in carbohydrate biosynthesis; gluconeogenesis. Functionally, involved in the gluconeogenesis. Catalyzes the conversion of oxaloacetate (OAA) to phosphoenolpyruvate (PEP) through direct phosphoryl transfer between the nucleoside triphosphate and OAA. The protein is Phosphoenolpyruvate carboxykinase (ATP) of Nitratiruptor sp. (strain SB155-2).